The chain runs to 353 residues: uncharacterized protein (353 aa).

It belongs to the mimivirus L17x/L18x family.

This is an uncharacterized protein from Acanthamoeba polyphaga (Amoeba).